A 1357-amino-acid chain; its full sequence is DNA-directed RNA polymerase subunit beta (1357 aa).

It belongs to the RNA polymerase beta chain family. The RNAP catalytic core consists of 2 alpha, 1 beta, 1 beta' and 1 omega subunit. When a sigma factor is associated with the core the holoenzyme is formed, which can initiate transcription.

It carries out the reaction RNA(n) + a ribonucleoside 5'-triphosphate = RNA(n+1) + diphosphate. In terms of biological role, DNA-dependent RNA polymerase catalyzes the transcription of DNA into RNA using the four ribonucleoside triphosphates as substrates. This Pseudomonas aeruginosa (strain UCBPP-PA14) protein is DNA-directed RNA polymerase subunit beta.